An 86-amino-acid polypeptide reads, in one-letter code: Small ribosomal subunit protein bS20 (86 aa).

This sequence belongs to the bacterial ribosomal protein bS20 family.

Functionally, binds directly to 16S ribosomal RNA. The polypeptide is Small ribosomal subunit protein bS20 (Kineococcus radiotolerans (strain ATCC BAA-149 / DSM 14245 / SRS30216)).